The following is a 1415-amino-acid chain: DNA-directed RNA polymerase subunit beta'' (1415 aa).

Zn(2+)-binding residues include cysteine 217, cysteine 291, cysteine 298, and cysteine 301.

The protein belongs to the RNA polymerase beta' chain family. RpoC2 subfamily. In plastids the minimal PEP RNA polymerase catalytic core is composed of four subunits: alpha, beta, beta', and beta''. When a (nuclear-encoded) sigma factor is associated with the core the holoenzyme is formed, which can initiate transcription. It depends on Zn(2+) as a cofactor.

The protein resides in the plastid. The protein localises to the chloroplast. The catalysed reaction is RNA(n) + a ribonucleoside 5'-triphosphate = RNA(n+1) + diphosphate. In terms of biological role, DNA-dependent RNA polymerase catalyzes the transcription of DNA into RNA using the four ribonucleoside triphosphates as substrates. The sequence is that of DNA-directed RNA polymerase subunit beta'' from Phaeodactylum tricornutum (strain CCAP 1055/1).